A 393-amino-acid polypeptide reads, in one-letter code: Methylthioribose kinase (393 aa).

Residues Asn-38, Lys-53, and 107 to 109 (EDL) contribute to the ATP site. Position 225 (Asp-225) interacts with substrate. 242-244 (DPE) provides a ligand contact to ATP. Position 332 (Arg-332) interacts with substrate.

The protein belongs to the methylthioribose kinase family. In terms of assembly, homodimer.

The catalysed reaction is 5-(methylsulfanyl)-D-ribose + ATP = 5-(methylsulfanyl)-alpha-D-ribose 1-phosphate + ADP + H(+). It participates in amino-acid biosynthesis; L-methionine biosynthesis via salvage pathway; S-methyl-5-thio-alpha-D-ribose 1-phosphate from S-methyl-5'-thioadenosine (hydrolase route): step 2/2. Functionally, catalyzes the phosphorylation of methylthioribose into methylthioribose-1-phosphate. The sequence is that of Methylthioribose kinase from Bacillus anthracis (strain A0248).